The primary structure comprises 162 residues: MQHLVLIGFMGSGKSSLAQELGLALKLEVLDTDMIISERVGLSVREIFEELGEDNFRMFEKNLIDELKTLKTPHVISTGGGIVMHDNLKGLGTTFYLKMDFETLIKRLNQKEREKRPLLNDLTQAKELFEKRQALYEKNASFIIDARGGLNNSLKQVLQFIA.

11–16 is a binding site for ATP; sequence GSGKSS. Serine 15 provides a ligand contact to Mg(2+). 3 residues coordinate substrate: aspartate 33, arginine 57, and glycine 80. Residue arginine 116 coordinates ATP. Arginine 132 is a substrate binding site.

The protein belongs to the shikimate kinase family. Monomer. Mg(2+) serves as cofactor.

It localises to the cytoplasm. The enzyme catalyses shikimate + ATP = 3-phosphoshikimate + ADP + H(+). It functions in the pathway metabolic intermediate biosynthesis; chorismate biosynthesis; chorismate from D-erythrose 4-phosphate and phosphoenolpyruvate: step 5/7. In terms of biological role, catalyzes the specific phosphorylation of the 3-hydroxyl group of shikimic acid using ATP as a cosubstrate. This chain is Shikimate kinase, found in Helicobacter pylori (strain P12).